We begin with the raw amino-acid sequence, 91 residues long: Small ribosomal subunit protein bS20 (91 aa).

A compositionally biased stretch (basic and acidic residues) spans Met-1–Asn-21. The disordered stretch occupies residues Met-1–Arg-24.

This sequence belongs to the bacterial ribosomal protein bS20 family.

Functionally, binds directly to 16S ribosomal RNA. The chain is Small ribosomal subunit protein bS20 from Chlorobaculum parvum (strain DSM 263 / NCIMB 8327) (Chlorobium vibrioforme subsp. thiosulfatophilum).